The chain runs to 337 residues: tRNA N6-adenosine threonylcarbamoyltransferase (337 aa).

Residues histidine 111 and histidine 115 each contribute to the Fe cation site. Residues 134–138 (LVSGG), aspartate 167, glycine 180, and asparagine 272 contribute to the substrate site. Aspartate 300 serves as a coordination point for Fe cation.

It belongs to the KAE1 / TsaD family. It depends on Fe(2+) as a cofactor.

Its subcellular location is the cytoplasm. The enzyme catalyses L-threonylcarbamoyladenylate + adenosine(37) in tRNA = N(6)-L-threonylcarbamoyladenosine(37) in tRNA + AMP + H(+). In terms of biological role, required for the formation of a threonylcarbamoyl group on adenosine at position 37 (t(6)A37) in tRNAs that read codons beginning with adenine. Is involved in the transfer of the threonylcarbamoyl moiety of threonylcarbamoyl-AMP (TC-AMP) to the N6 group of A37, together with TsaE and TsaB. TsaD likely plays a direct catalytic role in this reaction. The sequence is that of tRNA N6-adenosine threonylcarbamoyltransferase from Escherichia coli O139:H28 (strain E24377A / ETEC).